The chain runs to 183 residues: Apo-citrate lyase phosphoribosyl-dephospho-CoA transferase (183 aa).

It belongs to the CitX family.

It catalyses the reaction apo-[citrate lyase ACP] + 2'-(5''-triphospho-alpha-D-ribosyl)-3'-dephospho-CoA = holo-[citrate lyase ACP] + diphosphate. Transfers 2-(5''-triphosphoribosyl)-3'-dephosphocoenzyme-A on a serine residue to the apo-acyl carrier protein (gamma chain) of the citrate lyase to yield holo-acyl carrier protein. The sequence is that of Apo-citrate lyase phosphoribosyl-dephospho-CoA transferase from Escherichia coli O6:K15:H31 (strain 536 / UPEC).